The chain runs to 175 residues: Keratin-associated protein 13-2 (175 aa).

5 tandem repeats follow at residues cysteine 46–glycine 55, cysteine 56–serine 65, cysteine 66–proline 75, cysteine 76–threonine 85, and cysteine 92–glycine 101. Residues cysteine 46–glycine 101 are 5 X 10 AA approximate repeats.

The protein belongs to the PMG family. Interacts with hair keratins.

In the hair cortex, hair keratin intermediate filaments are embedded in an interfilamentous matrix, consisting of hair keratin-associated proteins (KRTAP), which are essential for the formation of a rigid and resistant hair shaft through their extensive disulfide bond cross-linking with abundant cysteine residues of hair keratins. The matrix proteins include the high-sulfur and high-glycine-tyrosine keratins. The protein is Keratin-associated protein 13-2 (KRTAP13-2) of Homo sapiens (Human).